The sequence spans 658 residues: Transmembrane 9 superfamily member 11 (658 aa).

The first 23 residues, 1–23 (MRSMDRFGIWVLAILLVIQSSFG), serve as a signal peptide directing secretion. Residues 24–291 (FYLPGSYPHK…LKMEGSKVHW (268 aa)) lie on the Lumenal side of the membrane. The chain crosses the membrane as a helical span at residues 292–312 (FSILNSLMVITFLAGIVLVIF). Topologically, residues 313-364 (LRTVRRDLTRYEELDKEAQAQMNEELSGWKLVVGDVFRAPSNASLLCVMVGD) are cytoplasmic. The helical transmembrane segment at 365 to 385 (GVQILGMAVVTILFAALGFMS) threads the bilayer. At 386–391 (PASRGT) the chain is on the lumenal side. Residues 392-412 (LITGMLFFYMILGIAAGYVSV) traverse the membrane as a helical segment. Residues 413–432 (RLWRTIGCGEHRGWMSVAWK) are Cytoplasmic-facing. Residues 433 to 453 (AACFFPGIAFLILTTLNFLLW) form a helical membrane-spanning segment. Residues 454–462 (GSHSTGAIP) lie on the Lumenal side of the membrane. The chain crosses the membrane as a helical span at residues 463–483 (FSLFVILLLLWFCISVPLTLI). At 484–515 (GGYFGAKAPHIEFPVRTNQIPREIPAQKYPSW) the chain is on the cytoplasmic side. Residues 516–536 (LLVLGAGTLPFGTLFIELFFI) traverse the membrane as a helical segment. The Lumenal portion of the chain corresponds to 537–547 (MSSIWMGRVYY). The helical transmembrane segment at 548–568 (VFGFLFVVLILLVVVCAEVSL) threads the bilayer. Residues 569–586 (VLTYMHLCVEDYKWWWKS) lie on the Cytoplasmic side of the membrane. Residues 587–607 (FFASGSVAIYIFIYSINYLVF) traverse the membrane as a helical segment. Topologically, residues 608–619 (DLKSLSGPVSAT) are lumenal. Residues 620–640 (LYLGYSLFMVLAIMLATGTVG) form a helical membrane-spanning segment. Residues 641-658 (FLSSFWFVHYLFSSVKLD) are Cytoplasmic-facing. The short motif at 647–652 (FVHYLF) is the Endoplasmic reticulum export signal element. The Golgi retention signal motif lies at 656 to 658 (KLD).

Belongs to the nonaspanin (TM9SF) (TC 9.A.2) family.

It is found in the endosome membrane. The protein localises to the golgi apparatus membrane. This is Transmembrane 9 superfamily member 11 from Arabidopsis thaliana (Mouse-ear cress).